The sequence spans 219 residues: Thiamine-phosphate synthase (219 aa).

4-amino-2-methyl-5-(diphosphooxymethyl)pyrimidine-binding positions include 44–48 (QFREK) and N79. D80 and D99 together coordinate Mg(2+). A 4-amino-2-methyl-5-(diphosphooxymethyl)pyrimidine-binding site is contributed by S117. Residue 143–145 (TST) coordinates 2-[(2R,5Z)-2-carboxy-4-methylthiazol-5(2H)-ylidene]ethyl phosphate. Position 146 (K146) interacts with 4-amino-2-methyl-5-(diphosphooxymethyl)pyrimidine. Residues G175 and 195 to 196 (IS) contribute to the 2-[(2R,5Z)-2-carboxy-4-methylthiazol-5(2H)-ylidene]ethyl phosphate site.

It belongs to the thiamine-phosphate synthase family. The cofactor is Mg(2+).

It catalyses the reaction 2-[(2R,5Z)-2-carboxy-4-methylthiazol-5(2H)-ylidene]ethyl phosphate + 4-amino-2-methyl-5-(diphosphooxymethyl)pyrimidine + 2 H(+) = thiamine phosphate + CO2 + diphosphate. It carries out the reaction 2-(2-carboxy-4-methylthiazol-5-yl)ethyl phosphate + 4-amino-2-methyl-5-(diphosphooxymethyl)pyrimidine + 2 H(+) = thiamine phosphate + CO2 + diphosphate. The enzyme catalyses 4-methyl-5-(2-phosphooxyethyl)-thiazole + 4-amino-2-methyl-5-(diphosphooxymethyl)pyrimidine + H(+) = thiamine phosphate + diphosphate. It functions in the pathway cofactor biosynthesis; thiamine diphosphate biosynthesis; thiamine phosphate from 4-amino-2-methyl-5-diphosphomethylpyrimidine and 4-methyl-5-(2-phosphoethyl)-thiazole: step 1/1. In terms of biological role, condenses 4-methyl-5-(beta-hydroxyethyl)thiazole monophosphate (THZ-P) and 2-methyl-4-amino-5-hydroxymethyl pyrimidine pyrophosphate (HMP-PP) to form thiamine monophosphate (TMP). This Bacillus cereus (strain B4264) protein is Thiamine-phosphate synthase.